The sequence spans 413 residues: MGSIIDAAAAADPVVLMETAFRKAVKSRQIPGAVIMARDCSGNLNYTRCFGARTVRRDECNQLPPLQVDTPCRLASATKLLTTIMALQCMERGLVDLDETVDRLLPDLSAMPVLEGFDDAGNARLRERRGKITLRHLLTHTSGLSYVFLHPLLREYMAQGHLQSAEKFGIQSRLAPPAVNDPGAEWIYGANLDWAGKLVERATGLDLEQYLQENICAPLGITDMTFKLQQRPDMLARRADQTHRNSADGRLRYDDSVYFRADGEECFGGQGVFSGPGSYMKVLHSLLKRDGLLLQPQTVDLMFQPALEPRLEEQMNQHMDASPHINYGGPMPMVLRRSFGLGGIIALEDLDGENWRRKGSLTFGGGPNIVWQIDPKAGLCTLAFFQLEPWNDPVCRDLTRTFEHAIYAQYQQG.

R73 is a binding site for monacolin J. Catalysis depends on S76, which acts as the Acyl-ester intermediate. Monacolin J contacts are provided by R173, Y188, and Y258. G366 contributes to the 2-methylbutanoate binding site. Residues E388 and W390 each contribute to the monacolin J site.

This sequence belongs to the class-A beta-lactamase family. As to quaternary structure, interacts with LovF.

It carries out the reaction monacolin J carboxylate + (S)-2-methylbutanoyl-[2-methylbutanoate polyketide synthase] = lovastatin carboxylate + holo-[2-methylbutanoate polyketide synthase]. It participates in polyketide biosynthesis; lovastatin biosynthesis. Its function is as follows. Monacolin J acid methylbutanoyltransferase; part of the gene cluster that mediates the biosynthesis of lovastatin (also known as mevinolin, mevacor or monacolin K), a hypolipidemic inhibitor of (3S)-hydroxymethylglutaryl-coenzyme A (HMG-CoA) reductase (HMGR). The first step in the biosynthesis of lovastatin is the production of dihydromonacolin L acid by the lovastatin nonaketide synthase lovB and the trans-acting enoyl reductase lovC via condensation of one acetyl-CoA unit and 8 malonyl-CoA units. Dihydromonacolin L acid is released from lovB by the thioesterase lovG. Next, dihydromonacolin L acid is oxidized by the dihydromonacolin L monooxygenase lovA twice to form monacolin J acid. The 2-methylbutyrate moiety of lovastatin is synthesized by the lovastatin diketide synthase lovF via condensation of one acetyl-CoA unit and one malonyl-CoA unit. Finally, the covalent attachment of this moiety to monacolin J acid is catalyzed by the transesterase lovD to yield lovastatin. LovD has broad substrate specificity and can also convert monacolin J to simvastatin using alpha-dimethylbutanoyl-S-methyl-3-mercaptopropionate (DMB-S-MMP) as the thioester acyl donor, and can also catalyze the reverse reaction and function as hydrolase in vitro. LovD has much higher activity with LovF-bound 2-methylbutanoate than with free diketide substrates. In Aspergillus terreus, this protein is Monacolin J acid methylbutanoyltransferase.